A 178-amino-acid polypeptide reads, in one-letter code: Gamma-crystallin S (178 aa).

Ser2 is modified (N-acetylserine). The N-terminal arm stretch occupies residues 2–5 (SKAG). 2 Beta/gamma crystallin 'Greek key' domains span residues 6 to 44 (TKIT…RVEG) and 45 to 87 (GTWA…RAVH). The tract at residues 88-93 (LSSGGQ) is connecting peptide. 2 Beta/gamma crystallin 'Greek key' domains span residues 94 to 134 (YKLQ…KVLE) and 135 to 177 (GAWI…RRIV).

Belongs to the beta/gamma-crystallin family. As to quaternary structure, monomer.

In terms of biological role, crystallins are the dominant structural components of the vertebrate eye lens. The protein is Gamma-crystallin S (CRYGS) of Bos taurus (Bovine).